A 240-amino-acid polypeptide reads, in one-letter code: Ribonuclease PH (240 aa).

Phosphate is bound by residues Arg-87 and 125–127 (GTR).

This sequence belongs to the RNase PH family. As to quaternary structure, homohexameric ring arranged as a trimer of dimers.

It catalyses the reaction tRNA(n+1) + phosphate = tRNA(n) + a ribonucleoside 5'-diphosphate. Its function is as follows. Phosphorolytic 3'-5' exoribonuclease that plays an important role in tRNA 3'-end maturation. Removes nucleotide residues following the 3'-CCA terminus of tRNAs; can also add nucleotides to the ends of RNA molecules by using nucleoside diphosphates as substrates, but this may not be physiologically important. Probably plays a role in initiation of 16S rRNA degradation (leading to ribosome degradation) during starvation. The polypeptide is Ribonuclease PH (Pseudomonas putida (strain ATCC 47054 / DSM 6125 / CFBP 8728 / NCIMB 11950 / KT2440)).